Here is a 361-residue protein sequence, read N- to C-terminus: MTAHLRPVLAGLPVYVPGKTVPGAIKLASNETVFGPLPSVRAAIEHATQSINRYPDNGCLAVKAALARHVSSLSAADFGPEHIAVGCGSVSLCQQLVQITASVGDEVIFGWRSFELYPPQVQVAGATAIQVPLTNHTFDLEAMLAAVTERTRLIIVCDPNNPTSTVVQPEALAEFVRSVPPHILVAIDEAYVEYLRDGTVPDSPHLVRTHSNVVVLRTFSKAYGLAGLRVGYAVGQPDVIAPLDKVYVPFTVSSLAQAAAIASVQAADELLARTDAVVAERGRVSAELRAAGFTVPPSQANFVWLPLEDRTTDFVTQAAKAHIVVRPYGADGVRVTIAAPEENDALLRFARCWITHRDGAR.

Residue lysine 221 is modified to N6-(pyridoxal phosphate)lysine.

This sequence belongs to the class-II pyridoxal-phosphate-dependent aminotransferase family. As to quaternary structure, homodimer. Requires pyridoxal 5'-phosphate as cofactor.

The enzyme catalyses an aromatic L-alpha-amino acid + 2-oxoglutarate = an aromatic oxo-acid + L-glutamate. Functionally, aminotransferase that catalyzes the conversion of aromatic amino acids and 2-oxoglutarate into corresponding aromatic oxo acids and L-glutamate. This Mycobacterium ulcerans (strain Agy99) protein is Aromatic amino acid aminotransferase.